Reading from the N-terminus, the 298-residue chain is Inosose dehydratase (298 aa).

The protein belongs to the IolE/MocC family. The cofactor is glutathione. It depends on Co(2+) as a cofactor. Mn(2+) serves as cofactor.

It carries out the reaction scyllo-inosose = 3D-3,5/4-trihydroxycyclohexane-1,2-dione + H2O. It participates in polyol metabolism; myo-inositol degradation into acetyl-CoA; acetyl-CoA from myo-inositol: step 2/7. Functionally, catalyzes the dehydration of inosose (2-keto-myo-inositol, 2KMI or 2,4,6/3,5-pentahydroxycyclohexanone) to 3D-(3,5/4)-trihydroxycyclohexane-1,2-dione (D-2,3-diketo-4-deoxy-epi-inositol). This Clostridium botulinum (strain Alaska E43 / Type E3) protein is Inosose dehydratase.